Reading from the N-terminus, the 101-residue chain is Protein S100-A4 (101 aa).

Position 2 is an N-acetylalanine (A2). EF-hand domains lie at 12–47 (IVST…SFLG) and 50–85 (TDEA…IAMM). Residues K28 and E33 each contribute to the Ca(2+) site. Position 35 is an N6-acetyllysine (K35). Ca(2+) is bound by residues D63, N65, D67, E69, and E74.

The protein belongs to the S-100 family. In terms of assembly, homodimer. Interacts with PPFIBP1 in a calcium-dependent mode. Interacts with PGLYRP1; this complex acts as a chemoattractant that promotes lymphocyte movement. Interacts with MYH9; this interaction increases cell motility. Interacts with Annexin 2/ANXA2. Interacts with TP53; this interaction promotes TP53 degradation. Interacts with CCR5 and CXCR3. Interacts with FCGR3A; this interaction inhibits PKC-dependent phosphorylation of FCGR3A.

The protein resides in the secreted. It is found in the nucleus. Its subcellular location is the cytoplasm. Functionally, calcium-binding protein that plays a role in various cellular processes including motility, angiogenesis, cell differentiation, apoptosis, and autophagy. Increases cell motility and invasiveness by interacting with non-muscle myosin heavy chain (NMMHC) IIA/MYH9. Mechanistically, promotes filament depolymerization and increases the amount of soluble myosin-IIA, resulting in the formation of stable protrusions facilitating chemotaxis. Also modulates the pro-apoptotic function of TP53 by binding to its C-terminal transactivation domain within the nucleus and reducing its protein levels. Within the extracellular space, stimulates cytokine production including granulocyte colony-stimulating factor and CCL24 from T-lymphocytes. In addition, stimulates T-lymphocyte chemotaxis by acting as a chemoattractant complex with PGLYRP1 that promotes lymphocyte migration via CCR5 and CXCR3 receptors. The polypeptide is Protein S100-A4 (S100a4) (Rattus norvegicus (Rat)).